A 90-amino-acid chain; its full sequence is Molybdopterin synthase sulfur carrier subunit (90 aa).

1-thioglycine; alternate is present on Gly-90. Gly-90 carries the glycyl adenylate; alternate modification.

The protein belongs to the MoaD family. MOCS2A subfamily. Heterotetramer; composed of 2 small (Mocs2A) and 2 large (Mocs2B) subunits. In terms of processing, C-terminal thiocarboxylation occurs in 2 steps, it is first acyl-adenylated (-COAMP) via the hesA/moeB/thiF part of MOCS3, then thiocarboxylated (-COSH) via the rhodanese domain of MOCS3.

The protein localises to the cytoplasm. It functions in the pathway cofactor biosynthesis; molybdopterin biosynthesis. In terms of biological role, acts as a sulfur carrier required for molybdopterin biosynthesis. Component of the molybdopterin synthase complex that catalyzes the conversion of precursor Z into molybdopterin by mediating the incorporation of 2 sulfur atoms into precursor Z to generate a dithiolene group. In the complex, serves as sulfur donor by being thiocarboxylated (-COSH) at its C-terminus by MOCS3. After interaction with Mocs2B, the sulfur is then transferred to precursor Z to form molybdopterin. This chain is Molybdopterin synthase sulfur carrier subunit, found in Drosophila erecta (Fruit fly).